The primary structure comprises 290 residues: Cilia- and flagella-associated protein 298-A (290 aa).

The protein belongs to the CFAP298 family.

The protein resides in the cytoplasm. Its subcellular location is the cytoskeleton. The protein localises to the cilium basal body. Its function is as follows. Plays a role in motile cilium function, possibly by acting on outer dynein arm assembly. Seems to be important for initiation rather than maintenance of cilium motility. Required for correct positioning of the cilium at the apical cell surface, suggesting an additional role in the planar cell polarity (PCP) pathway. May suppress canonical Wnt signaling activity. The polypeptide is Cilia- and flagella-associated protein 298-A (cfap298-a) (Xenopus laevis (African clawed frog)).